A 3303-amino-acid polypeptide reads, in one-letter code: Protein unc-80 homolog (3303 aa).

A compositionally biased stretch (low complexity) spans 1–37 (MVTNAAGTAATGGATSNTTNNNNLQTNNNSHGANNNN). A disordered region spans residues 1–43 (MVTNAAGTAATGGATSNTTNNNNLQTNNNSHGANNNNDDFDFD). The chain crosses the membrane as a helical span at residues 202 to 222 (LFSVPTITLFVYLFAPIIHHL). Disordered regions lie at residues 284–316 (LSAD…VSSP), 361–422 (LQQQ…SESI), 491–512 (LYQG…KDYI), 526–546 (AEEP…KKKR), 1036–1067 (FRRR…SERN), 1443–1563 (LHEP…DDTA), and 1627–1671 (VEPT…KDRI). Residues 361 to 377 (LQQQQSQSRRGSRQSMN) show a composition bias toward low complexity. 2 stretches are compositionally biased toward basic and acidic residues: residues 378-391 (SRDK…KFEF) and 401-422 (SMKE…SESI). Residues 495 to 505 (PGSNSRDSPGS) show a composition bias toward polar residues. Residues 1058 to 1067 (SDSTSSSERN) show a composition bias toward polar residues. A compositionally biased stretch (basic residues) spans 1490 to 1499 (FKRRSLKLRR). Residues 1546–1556 (DDQQPESPTDS) show a composition bias toward polar residues. Residues 1660–1671 (KRKDSLSRKDRI) show a composition bias toward basic and acidic residues. Transmembrane regions (helical) follow at residues 1969–1989 (VYEI…ALFL), 2018–2038 (LPQQ…MFYV), and 2048–2068 (LVGS…GIMF). Disordered regions lie at residues 2518–2550 (NGPY…FEEE), 3003–3158 (EEKR…FKAQ), and 3170–3262 (FRHS…YRDN). Positions 3003 to 3018 (EEKRYDRESSEQKKSD) are enriched in basic and acidic residues. Composition is skewed to polar residues over residues 3033–3053 (QRPS…SHSH) and 3071–3106 (PSDT…SQSG). Residues 3124–3134 (SGHGSGGGIGT) are compositionally biased toward gly residues. Over residues 3135–3152 (GAASAVPSHLSHSQSLQQ) the composition is skewed to low complexity. Over residues 3198-3217 (SRLQRSKAASRKTFRLKRSR) the composition is skewed to basic residues. Positions 3226–3239 (IVTSQEEQAPQAQA) are enriched in polar residues. Over residues 3246-3257 (SWDSVSQTSSTS) the composition is skewed to low complexity.

This sequence belongs to the unc-80 family. As to quaternary structure, interacts with unc79 and na. Can interact with unc79 independently of na.

It localises to the membrane. Component of the na (narrow abdomen) sodium channel complex. In the circadian clock neurons it functions with na and unc79 to promote circadian rhythmicity. This Drosophila melanogaster (Fruit fly) protein is Protein unc-80 homolog.